The primary structure comprises 5098 residues: Malformin synthetase mlfA (5098 aa).

An adenylation 1 region spans residues Glu225–Leu616. Residues Ser756 to Glu829 form the Carrier 1 domain. Position 790 is an O-(pantetheine 4'-phosphoryl)serine (Ser790). Positions Glu867 to Ala1298 are condensation 1. The interval Asp1326–Arg1715 is adenylation 2. The Carrier 2 domain maps to Thr1853–Ala1930. The residue at position 1890 (Ser1890) is an O-(pantetheine 4'-phosphoryl)serine. 2 disordered regions span residues Ala1930–Asp1960 and Gly1993–Ser2022. 2 stretches are compositionally biased toward low complexity: residues Ser1933–Asp1957 and Gly1993–Ser2011. The interval Glu2063–Leu2478 is condensation 2. Residues Val2501–Leu2893 are adenylation 3. Residues Arg3029–Arg3105 form the Carrier 3 domain. At Ser3066 the chain carries O-(pantetheine 4'-phosphoryl)serine. Condensation regions lie at residues Trp3122–Gln3587 and Asn3608–Met4027. Residues His4052 to Phe4442 form an adenylation 4 region. The 77-residue stretch at Met4576–Val4652 folds into the Carrier 4 domain. Ser4613 bears the O-(pantetheine 4'-phosphoryl)serine mark. The interval Asp4689–Asn5016 is condensation 5.

This sequence belongs to the NRP synthetase family.

The protein operates within secondary metabolite biosynthesis. Nonribosomal peptide synthetase; part of the gene cluster that mediates the biosynthesis of malformins, cyclic pentapeptides with a disulfide bond between 2 consecutive cysteins, that show potential anti-tumor as well as antimalarial and antitrypanosomal properties. The nonribosomal peptide synthetase mlfA is responsible of the formation of the cyclic pentapeptide. The malformin biosynthesis clusters in malformin-producing fungi also contain enzymes involved in the formation of the disulfide bond between the two consecutive cysteins within malformins, in addition to additional tailoring enzymes such as methyltransferases or oxidoreductases. They are also composed of up to 4 major facilitator superfamily transporters, and transcription factors probably involved in the regulation of the expression of those clusters. This is Malformin synthetase mlfA from Aspergillus homomorphus (strain CBS 101889).